A 453-amino-acid chain; its full sequence is Ribulose bisphosphate carboxylase large chain (453 aa).

Residues 1–2 constitute a propeptide that is removed on maturation; the sequence is MS. The residue at position 3 (Pro-3) is an N-acetylproline. The residue at position 14 (Lys-14) is an N6,N6,N6-trimethyllysine. 2 residues coordinate substrate: Asn-123 and Thr-173. Lys-175 acts as the Proton acceptor in catalysis. Residue Lys-177 participates in substrate binding. Mg(2+) contacts are provided by Lys-201, Asp-203, and Glu-204. At Lys-201 the chain carries N6-carboxylysine. His-294 (proton acceptor) is an active-site residue. Residues Arg-295, His-327, and Ser-379 each coordinate substrate.

It belongs to the RuBisCO large chain family. Type I subfamily. Heterohexadecamer of 8 large chains and 8 small chains; disulfide-linked. The disulfide link is formed within the large subunit homodimers. Mg(2+) serves as cofactor. In terms of processing, the disulfide bond which can form in the large chain dimeric partners within the hexadecamer appears to be associated with oxidative stress and protein turnover.

Its subcellular location is the plastid. It localises to the chloroplast. The enzyme catalyses 2 (2R)-3-phosphoglycerate + 2 H(+) = D-ribulose 1,5-bisphosphate + CO2 + H2O. The catalysed reaction is D-ribulose 1,5-bisphosphate + O2 = 2-phosphoglycolate + (2R)-3-phosphoglycerate + 2 H(+). Its function is as follows. RuBisCO catalyzes two reactions: the carboxylation of D-ribulose 1,5-bisphosphate, the primary event in carbon dioxide fixation, as well as the oxidative fragmentation of the pentose substrate in the photorespiration process. Both reactions occur simultaneously and in competition at the same active site. The sequence is that of Ribulose bisphosphate carboxylase large chain from Cruciata glabra (Slender crosswort).